Here is a 659-residue protein sequence, read N- to C-terminus: Tetratricopeptide repeat protein 30 homolog (659 aa).

7 TPR repeats span residues 3 to 36 (SQNMLIRDGEYTKSIYTMIKEERFQEAINVLNGI), 43 to 76 (RAGLSLLGHCYYQTQDFIEASNCYEYLVNLVPDV), 143 to 176 (ATVKNDEGCLLFQANMFEDALQRYVSALQAGGFN), 178 to 210 (HIAYNAALCHYRKKENSQALNYIAEIVERGIRN), 391 to 424 (CRSAPDQNALRVALREYEFALESYLPVAMARAWI), 450 to 483 (TWRLHAAHVLFMRGDRYKEAAAFYEPIVRQNYDD), and 533 to 566 (CIVNLVIGTLYCAKGNYEFGLSRIAHALDGGSGA).

It belongs to the TTC30/dfy-1/fleer family.

It is found in the cell projection. The protein resides in the cilium. Functionally, required for polyglutamylation of axonemal tubulin in sensory cilia. Plays a role in anterograde intraflagellar transport (IFT), the process by which cilia precursors are transported from the base of the cilium to the site of their incorporation at the tip. The sequence is that of Tetratricopeptide repeat protein 30 homolog from Aedes aegypti (Yellowfever mosquito).